We begin with the raw amino-acid sequence, 341 residues long: Binder of USO1 and GRH1 protein 1 (341 aa).

The interval 1–181 (MSEQESDEVK…AADDLFANDG (181 aa)) is disordered. Ser2 bears the N-acetylserine mark. A coiled-coil region spans residues 2-41 (SEQESDEVKRMKQLEEARKRVEELKKKKNKKNKGKKNKNS). Positions 7 to 26 (DEVKRMKQLEEARKRVEELK) are enriched in basic and acidic residues. The segment covering 27-39 (KKKNKKNKGKKNK) has biased composition (basic residues). Over residues 69–78 (KANSTKSENN) the composition is skewed to polar residues. Acidic residues predominate over residues 79–91 (DQNDVDEESEEKE). Ser87 carries the phosphoserine modification. Residues 118–132 (GKDDAENTKKEEVQE) are compositionally biased toward basic and acidic residues. The span at 158–171 (VQTQEGNEPSNTSE) shows a compositional bias: polar residues. A Phosphoserine modification is found at Ser170. Residues 188 to 272 (LTTIKKQKEE…LKLAEAKAAR (85 aa)) are a coiled coil. At Thr292 the chain carries Phosphothreonine.

As to quaternary structure, interacts with GRH1 (via C-terminus), probably forming a heterooligomer consisting of a GRH1 dimer and a BUG1 dimer.

It localises to the cytoplasm. It is found in the golgi apparatus. The protein localises to the cis-Golgi network membrane. In terms of biological role, involved in ER to Golgi vesicle-mediated transport by either facilitating USO1-dependent and -independent tethering or increasing target accuracy of fusion events of COPII-coated vesicles. This Saccharomyces cerevisiae (strain ATCC 204508 / S288c) (Baker's yeast) protein is Binder of USO1 and GRH1 protein 1.